The following is a 210-amino-acid chain: ATP-dependent Clp protease proteolytic subunit (210 aa).

Ser-107 (nucleophile) is an active-site residue. The active site involves His-132.

Belongs to the peptidase S14 family. In terms of assembly, fourteen ClpP subunits assemble into 2 heptameric rings which stack back to back to give a disk-like structure with a central cavity, resembling the structure of eukaryotic proteasomes.

The protein resides in the cytoplasm. The enzyme catalyses Hydrolysis of proteins to small peptides in the presence of ATP and magnesium. alpha-casein is the usual test substrate. In the absence of ATP, only oligopeptides shorter than five residues are hydrolyzed (such as succinyl-Leu-Tyr-|-NHMec, and Leu-Tyr-Leu-|-Tyr-Trp, in which cleavage of the -Tyr-|-Leu- and -Tyr-|-Trp bonds also occurs).. In terms of biological role, cleaves peptides in various proteins in a process that requires ATP hydrolysis. Has a chymotrypsin-like activity. Plays a major role in the degradation of misfolded proteins. The protein is ATP-dependent Clp protease proteolytic subunit of Ruegeria sp. (strain TM1040) (Silicibacter sp.).